A 462-amino-acid polypeptide reads, in one-letter code: Metal cation symporter ZIP14 (462 aa).

Residues Met-1 to Ala-16 form the signal peptide. The Extracellular segment spans residues Gly-17–Gly-138. Asn-42, Asn-68, Asn-83, and Asn-119 each carry an N-linked (GlcNAc...) asparagine glycan. A helical membrane pass occupies residues Phe-139–Met-159. The Cytoplasmic segment spans residues Lys-160–Leu-167. Residues Leu-168 to Ile-188 form a helical membrane-spanning segment. Topologically, residues Pro-189–Tyr-201 are extracellular. The chain crosses the membrane as a helical span at residues Val-202–Leu-222. Topologically, residues Lys-223 to Gly-322 are cytoplasmic. Residues His-230 to Tyr-237 carry the HHHGHXHX-motif motif. The disordered stretch occupies residues Ser-235–Leu-285. Composition is skewed to basic and acidic residues over residues Thr-241–Thr-251 and Ser-269–Ala-279. The chain crosses the membrane as a helical span at residues Leu-323–Ile-343. Residues Leu-344–Gln-367 lie on the Extracellular side of the membrane. Residues Glu-346–Glu-351 carry the XEXPHE-motif motif. The chain crosses the membrane as a helical span at residues Ala-368–Leu-388. At Ala-389–Asn-396 the chain is on the cytoplasmic side. The helical transmembrane segment at Trp-397 to Glu-417 threads the bilayer. Topologically, residues Met-418–Ala-431 are extracellular. A helical transmembrane segment spans residues Phe-432 to Leu-452. At Thr-453–Gly-462 the chain is on the cytoplasmic side.

Belongs to the ZIP transporter (TC 2.A.5) family. Homotrimer.

It is found in the cell membrane. The protein localises to the apical cell membrane. Its subcellular location is the basolateral cell membrane. The protein resides in the early endosome membrane. It localises to the late endosome membrane. It is found in the lysosome membrane. It catalyses the reaction Zn(2+)(out) + 2 hydrogencarbonate(out) = Zn(2+)(in) + 2 hydrogencarbonate(in). The enzyme catalyses Mn(2+)(out) + 2 hydrogencarbonate(out) = Mn(2+)(in) + 2 hydrogencarbonate(in). It carries out the reaction Fe(2+)(out) + 2 hydrogencarbonate(out) = Fe(2+)(in) + 2 hydrogencarbonate(in). The catalysed reaction is Cd(2+)(out) + 2 hydrogencarbonate(out) = Cd(2+)(in) + 2 hydrogencarbonate(in). Functionally, electroneutral transporter of the plasma membrane mediating the cellular uptake of the divalent metal cations zinc, manganese and iron that are important for tissue homeostasis, metabolism, development and immunity. Functions as an energy-dependent symporter, transporting through the membranes an electroneutral complex composed of a divalent metal cation and two bicarbonate anions. Beside these endogenous cellular substrates, can also import cadmium a non-essential metal which is cytotoxic and carcinogenic. In Xenopus tropicalis (Western clawed frog), this protein is Metal cation symporter ZIP14.